The chain runs to 727 residues: Pentatricopeptide repeat-containing protein At4g20740 (727 aa).

Residues 1 to 84 (MKSPKPPNLS…PSPPSHSTVI (84 aa)) are disordered. Over residues 38 to 56 (SNRQSIPRVSPQPQSNSLA) the composition is skewed to polar residues. A compositionally biased stretch (basic and acidic residues) spans 59 to 70 (TPFDLRKWDPET). PPR repeat units follow at residues 157 to 191 (DFAAYNAFAYCLNRNGHFRAADQLPELMDSQGRPP), 192 to 226 (SEKQFEILIRMHADNRRGLRVYYVYEKMKKFGFKP), 227 to 261 (RVFLYNRIMDALVKNGYFDLALAVYEDFKEDGLVE), 262 to 296 (ESTTFMILVKGLCKAGRIEEMLEILQRMRENLCKP), 297 to 331 (DVFAYTAMIKTLVSEGNLDASLRVWDEMRRDEIKP), 332 to 366 (DVMAYGTLVVGLCKDGRVERGYELFMEMKGKQILI), 367 to 401 (DREIYRVLIEGFVADGKVRSACNLWEDLVDSGYIA), 402 to 436 (DIGIYNAVIKGLCSVNQVDKAYKLFQVAIEEELEP), 437 to 471 (DFETLSPIMVAYVVMNRLSDFSNVLERIGELGYPV), 506 to 540 (SVSVYNILMEALYKMGDIQKSLSLFYEMRKLGFEP), 541 to 575 (DSSSYSIAICCFVEKGDVKAACSFHEKIIEMSCVP), 576 to 606 (SIAAYLSLTKGLCQIGEIDAVMLLVRECLGN), 612 to 646 (MEFKYALTVCHVCKGSNAEKVMKVVDEMNQEGVFI), and 647 to 681 (NEVIYCAIISGMSKHGTIKVAREVFTELKKRKVMT).

It belongs to the PPR family. P subfamily.

This is Pentatricopeptide repeat-containing protein At4g20740 from Arabidopsis thaliana (Mouse-ear cress).